The following is a 104-amino-acid chain: Large ribosomal subunit protein uL24 (104 aa).

It belongs to the universal ribosomal protein uL24 family. Part of the 50S ribosomal subunit.

In terms of biological role, one of two assembly initiator proteins, it binds directly to the 5'-end of the 23S rRNA, where it nucleates assembly of the 50S subunit. Functionally, one of the proteins that surrounds the polypeptide exit tunnel on the outside of the subunit. This is Large ribosomal subunit protein uL24 from Clostridium botulinum (strain Eklund 17B / Type B).